Consider the following 433-residue polypeptide: MEVARDGIMHPVDDFLMVVKAAMLEMMMMGKMAERYYYYVQLAFKMLVGVLKNLPVVYSYRYDAREYITETSNAVLGDDEVFEFGSSGEMVNSFLAFLRRALDWCAKFDEPPDMGGHGIEFMYPTRPTRIQRSTMGYFVRPKVPAAIVADAAVAAANLHFSNQVGEVSVRVPSRDLQPGEAGPSSSGGGRRDPAQANRGPVARVTPFVVERRYEEGEPGENGDESDEDGGRMDGDEDAAQSEQNNDDGMDYESDVTDHSSAWGEEPDRRHDAEAGERGSERSGSNSEADERRRSYENDDIQVDVTSVSEDSESDGDFEERRDARIRGATADAPRPRRGEREEDDERGEGAANDGGRRPARRDSPDSVIVIDDTSSSEDETFPPVLWLQRRDDPRTLLSRTRRAASRTRTIGGTRPRSRSPHRRGEGRDLPEDN.

A helical transmembrane segment spans residues 36-58 (YYYYVQLAFKMLVGVLKNLPVVY). The disordered stretch occupies residues 169 to 433 (VRVPSRDLQP…GEGRDLPEDN (265 aa)). 2 stretches are compositionally biased toward acidic residues: residues 216 to 227 (GEPGENGDESDE) and 234 to 254 (GDEDAAQSEQNNDDGMDYESD). Basic and acidic residues-rich tracts occupy residues 265-280 (EPDRRHDAEAGERGSE), 354-364 (GGRRPARRDSP), and 422-433 (RRGEGRDLPEDN).

It localises to the host membrane. This is an uncharacterized protein from Psittacid herpesvirus 1 (isolate Amazon parrot/-/97-0001/1997) (PsHV-1).